We begin with the raw amino-acid sequence, 97 residues long: Large ribosomal subunit protein bL28 (97 aa).

Belongs to the bacterial ribosomal protein bL28 family.

This chain is Large ribosomal subunit protein bL28, found in Rickettsia akari (strain Hartford).